Consider the following 62-residue polypeptide: Short neurotoxin 1 (62 aa).

The segment covering Met1–Cys17 has biased composition (polar residues). Residues Met1–Gly20 are disordered. Disulfide bonds link Cys3/Cys24, Cys17/Cys41, Cys43/Cys54, and Cys55/Cys60.

It belongs to the three-finger toxin family. Short-chain subfamily. Type I alpha-neurotoxin sub-subfamily. In terms of tissue distribution, expressed by the venom gland.

The protein resides in the secreted. In terms of biological role, binds to muscle nicotinic acetylcholine receptor (nAChR) and inhibit acetylcholine from binding to the receptor, thereby impairing neuromuscular transmission. This Acanthophis antarcticus (Common death adder) protein is Short neurotoxin 1.